The following is a 299-amino-acid chain: Taste receptor type 2 member 1 (299 aa).

At Met1–Tyr9 the chain is on the extracellular side. The helical transmembrane segment at Phe10 to Val30 threads the bilayer. Over Asn31–Arg55 the chain is Cytoplasmic. A helical membrane pass occupies residues Ile56 to Ile76. Over Met77–Asn81 the chain is Extracellular. A helical transmembrane segment spans residues Cys82–Phe102. Topologically, residues Tyr103–Lys124 are cytoplasmic. A helical transmembrane segment spans residues Leu125 to Ser145. Topologically, residues Lys146–Ser178 are extracellular. Asn163 carries N-linked (GlcNAc...) asparagine glycosylation. Residues Phe179–Phe199 traverse the membrane as a helical segment. Topologically, residues Ser200–Ala222 are cytoplasmic. Residues Pro223–Ile243 traverse the membrane as a helical segment. Over Lys244–Phe257 the chain is Extracellular. Residues Ile258 to Ile278 form a helical membrane-spanning segment. Over Leu279–Gln299 the chain is Cytoplasmic.

This sequence belongs to the G-protein coupled receptor T2R family.

The protein resides in the membrane. Receptor that may play a role in the perception of bitterness and is gustducin-linked. May play a role in sensing the chemical composition of the gastrointestinal content. The activity of this receptor may stimulate alpha gustducin, mediate PLC-beta-2 activation and lead to the gating of TRPM5. The chain is Taste receptor type 2 member 1 (TAS2R1) from Gorilla gorilla gorilla (Western lowland gorilla).